Here is a 292-residue protein sequence, read N- to C-terminus: NAD kinase (292 aa).

D73 acts as the Proton acceptor in catalysis. Residues 73–74, 147–148, H158, R175, D177, 188–193, and Q247 contribute to the NAD(+) site; these read DG, NE, and TAYSLS.

This sequence belongs to the NAD kinase family. It depends on a divalent metal cation as a cofactor.

It is found in the cytoplasm. The enzyme catalyses NAD(+) + ATP = ADP + NADP(+) + H(+). Functionally, involved in the regulation of the intracellular balance of NAD and NADP, and is a key enzyme in the biosynthesis of NADP. Catalyzes specifically the phosphorylation on 2'-hydroxyl of the adenosine moiety of NAD to yield NADP. This chain is NAD kinase, found in Serratia proteamaculans (strain 568).